Reading from the N-terminus, the 174-residue chain is ATP synthase subunit delta (174 aa).

The protein belongs to the ATPase delta chain family. As to quaternary structure, F-type ATPases have 2 components, F(1) - the catalytic core - and F(0) - the membrane proton channel. F(1) has five subunits: alpha(3), beta(3), gamma(1), delta(1), epsilon(1). F(0) has three main subunits: a(1), b(2) and c(10-14). The alpha and beta chains form an alternating ring which encloses part of the gamma chain. F(1) is attached to F(0) by a central stalk formed by the gamma and epsilon chains, while a peripheral stalk is formed by the delta and b chains.

The protein resides in the cell inner membrane. In terms of biological role, f(1)F(0) ATP synthase produces ATP from ADP in the presence of a proton or sodium gradient. F-type ATPases consist of two structural domains, F(1) containing the extramembraneous catalytic core and F(0) containing the membrane proton channel, linked together by a central stalk and a peripheral stalk. During catalysis, ATP synthesis in the catalytic domain of F(1) is coupled via a rotary mechanism of the central stalk subunits to proton translocation. This protein is part of the stalk that links CF(0) to CF(1). It either transmits conformational changes from CF(0) to CF(1) or is implicated in proton conduction. The polypeptide is ATP synthase subunit delta (Francisella philomiragia subsp. philomiragia (strain ATCC 25017 / CCUG 19701 / FSC 153 / O#319-036)).